The following is a 203-amino-acid chain: Small ribosomal subunit protein uS4c (203 aa).

Residues 17 to 39 (TLPGLTTKKSNKLNRPGKDGNTD) form a disordered region. An S4 RNA-binding domain is found at 92–164 (MRLDTLCFTL…IKNNQVREIP (73 aa)).

The protein belongs to the universal ribosomal protein uS4 family. In terms of assembly, part of the 30S ribosomal subunit. Contacts protein S5. The interaction surface between S4 and S5 is involved in control of translational fidelity.

Its subcellular location is the plastid. It localises to the chloroplast. Functionally, one of the primary rRNA binding proteins, it binds directly to 16S rRNA where it nucleates assembly of the body of the 30S subunit. With S5 and S12 plays an important role in translational accuracy. The chain is Small ribosomal subunit protein uS4c (rps4) from Phaeodactylum tricornutum (strain CCAP 1055/1).